The primary structure comprises 146 residues: MPSQGKKYEYLEHTADIKFLAYGETVEEVFENAALAMFNVIIDTEKVSGETEREVLLTSPDLESLLVDWLSELLYLFEVDEVVFWKFQVEEIREEEGEYSIKALASGEKYYPESHPFETEIKAVTYNQLELEKTAGGWKAQVVVDI.

The Ca(2+) site is built by D16, D145, and I146.

The protein belongs to the archease family.

Functionally, activates the tRNA-splicing ligase complex by facilitating the enzymatic turnover of catalytic subunit RtcB. Acts by promoting the guanylylation of RtcB, a key intermediate step in tRNA ligation. Can also alter the NTP specificity of RtcB such that ATP, dGTP or ITP is used efficiently. The chain is Protein archease from Methanosarcina mazei (strain ATCC BAA-159 / DSM 3647 / Goe1 / Go1 / JCM 11833 / OCM 88) (Methanosarcina frisia).